A 199-amino-acid polypeptide reads, in one-letter code: Small ribosomal subunit protein uS4 (199 aa).

Positions 91–154 (SRLDNVVYRL…KDLIIVKEAL (64 aa)) constitute an S4 RNA-binding domain.

This sequence belongs to the universal ribosomal protein uS4 family. As to quaternary structure, part of the 30S ribosomal subunit. Contacts protein S5. The interaction surface between S4 and S5 is involved in control of translational fidelity.

In terms of biological role, one of the primary rRNA binding proteins, it binds directly to 16S rRNA where it nucleates assembly of the body of the 30S subunit. With S5 and S12 plays an important role in translational accuracy. The polypeptide is Small ribosomal subunit protein uS4 (Phytoplasma mali (strain AT)).